A 266-amino-acid polypeptide reads, in one-letter code: Glucosamine-6-phosphate deaminase (266 aa).

The active-site Proton acceptor; for enolization step is the Asp-72. Residue Asp-141 is the For ring-opening step of the active site. His-143 (proton acceptor; for ring-opening step) is an active-site residue. Residue Glu-148 is the For ring-opening step of the active site.

Belongs to the glucosamine/galactosamine-6-phosphate isomerase family. NagB subfamily. As to quaternary structure, homohexamer.

It carries out the reaction alpha-D-glucosamine 6-phosphate + H2O = beta-D-fructose 6-phosphate + NH4(+). It functions in the pathway amino-sugar metabolism; N-acetylneuraminate degradation; D-fructose 6-phosphate from N-acetylneuraminate: step 5/5. With respect to regulation, allosterically activated by N-acetylglucosamine 6-phosphate (GlcNAc6P). Functionally, catalyzes the reversible isomerization-deamination of glucosamine 6-phosphate (GlcN6P) to form fructose 6-phosphate (Fru6P) and ammonium ion. This is Glucosamine-6-phosphate deaminase from Aeromonas hydrophila subsp. hydrophila (strain ATCC 7966 / DSM 30187 / BCRC 13018 / CCUG 14551 / JCM 1027 / KCTC 2358 / NCIMB 9240 / NCTC 8049).